We begin with the raw amino-acid sequence, 84 residues long: Small nuclear ribonucleoprotein E (84 aa).

Residues 13–84 (INFIFKLLQQ…GDNITLIQAI (72 aa)) enclose the Sm domain.

This sequence belongs to the snRNP Sm proteins family. As to quaternary structure, component of the Sm core complex, present in spliceosomal snRNP U1, U2, U4/U6 and U5. The core complex contains smb1, smd1, smd2, smd3, sme1, smf1 and smg1 (Sm proteins B, D1, D2, D3, E, F and G, respectively), and is probably a heptameric ring structure.

It is found in the cytoplasm. It localises to the nucleus. Functionally, involved in pre-mRNA splicing. Binds and is required for the stability of snRNA U1, U2, U4 and U5 which contain a highly conserved structural motif called the Sm binding site. Involved in cap modification. The protein is Small nuclear ribonucleoprotein E of Schizosaccharomyces pombe (strain 972 / ATCC 24843) (Fission yeast).